The primary structure comprises 105 residues: Chloroacetanilide N-alkylformylase 2, ferredoxin component (105 aa).

Residues 2 to 105 (PKLVVVTREG…GLTVTIAPED (104 aa)) form the 2Fe-2S ferredoxin-type domain. Residues C40, C46, C49, and C86 each contribute to the [2Fe-2S] cluster site.

The protein belongs to the adrenodoxin/putidaredoxin family. The chloroacetanilide N-alkylformylase multicomponent enzyme system is composed of an oxygenase component (CndA) and an electron transfer component formed by a ferredoxin reductase (CndC1) and a ferredoxin (CndB1). In vitro, chloroacetanilide N-alkylformylase assays in which CndB1 is substituted for CndB2 demonstrate that the two enzymes possess nearly identical activities. [2Fe-2S] cluster serves as cofactor.

Functionally, component of the chloroacetanilide N-alkylformylase multicomponent enzyme system involved in the degradation of chloroacetanilide herbicides (N-alkoxyalkyl-N-chloroacetyl-substituted aniline derivatives). In vitro, functions as an intermediate electron transfer protein. The polypeptide is Chloroacetanilide N-alkylformylase 2, ferredoxin component (Rhizorhabdus wittichii (strain DC-6 / KACC 16600) (Sphingomonas wittichii)).